The primary structure comprises 160 residues: General odorant-binding protein 2 (160 aa).

Positions 1–20 (MFSFLILVFVASVADSVIGT) are cleaved as a signal peptide. Disulfide bonds link C38/C73, C69/C127, and C116/C136.

This sequence belongs to the PBP/GOBP family. As to quaternary structure, homodimer. In terms of tissue distribution, detected in antenna (at protein level). Expressed at high levels in antenna.

Its function is as follows. Present in the aqueous fluid surrounding olfactory sensory dendrites and are thought to aid in the capture and transport of hydrophobic odorants into and through this fluid. The sequence is that of General odorant-binding protein 2 from Bombyx mori (Silk moth).